The following is a 127-amino-acid chain: MSLLSNMISIVKVGYNARHLQVIVQNSKLCINVLSVLYKLGYIRGFIIKDQKNITILLKYINNKPAVRNIAVISTPGRRTYLKHKKLEKFLTKKDSGFLILSTSKGILTDEESNMFKIGGEALLKIN.

The protein belongs to the universal ribosomal protein uS8 family.

The protein localises to the mitochondrion. The chain is Small ribosomal subunit protein uS8m (RPS8) from Acanthamoeba castellanii (Amoeba).